The sequence spans 714 residues: Protein BLISTER (714 aa).

4 disordered regions span residues 1–113, 219–261, 288–325, and 519–576; these read MASA…VDFS, SSYL…KRSR, VTSSGSQLSGSDGFGPSYISGRRDSNGPSSLTSGASDY, and MVQK…SSNT. Residues 8–33 show a composition bias toward basic and acidic residues; it reads RRQEDVEAGRRKLEQFRKRKAAEKAK. Composition is skewed to polar residues over residues 36 to 50 and 58 to 74; these read SQNTQPVDNSQQSVI and SISNGPLKQSAESTSNE. Basic and acidic residues predominate over residues 92–102; that stretch reads DGSKERSRQDD. Composition is skewed to polar residues over residues 219–253, 288–297, 313–322, and 519–561; these read SSYLFNSPDTSSRPSEPSDFSVNITSSSPLNSAKS, VTSSGSQLSG, NGPSSLTSGA, and MVQK…SSNQ. Residues 356 to 525 adopt a coiled-coil conformation; the sequence is NDDFTALEQH…LQTMVQKASS (170 aa). Positions 562 to 576 are enriched in low complexity; it reads ETDSTTLLESDSSNT.

As to quaternary structure, interacts with CLF. Expressed in root tips, emerging lateral roots, shoot apical meristem (SAM), vasculature of cotyledons, leaves, sepals and carpels.

Its subcellular location is the nucleus. It localises to the cytoplasm. Functionally, is required for normal leaf, flower and seed development and controls cotyledon and leaf patterning by inhibiting premature differentiation. Regulates the expression of a subset of PcG target genes. Is required for the repression of the floral specific genes PI, SEP2, and SEP3, but also for the activation of FLC. Involved in response to cold. Involved in the regulation of COR15A, COR15B, BAM3 and AMY3 transcripts, and ascorbate levels in response to prolonged chilling temperatures. In Arabidopsis thaliana (Mouse-ear cress), this protein is Protein BLISTER.